The sequence spans 322 residues: 8-oxo-(d)GTP phosphatase (322 aa).

A disordered region spans residues 1 to 21; it reads MMPVDDLQEIPLSKDTTEKSK. Positions 22–156 constitute a Nudix hydrolase domain; the sequence is HTVRAAGAVL…DDRKVLRRFV (135 aa). Substrate is bound by residues 55 to 58, aspartate 60, and 65 to 67; these read RPRY and KGK. Mg(2+) contacts are provided by lysine 65, glutamate 81, and glutamate 85. The Nudix box motif lies at 66 to 87; the sequence is GKLDQGETEPVAAAREIHEETG. The substrate site is built by tyrosine 101, lysine 108, glutamate 127, and tyrosine 145. Glutamate 127 contacts Mg(2+).

It belongs to the Nudix hydrolase family. In terms of assembly, forms head-to-tail homodimers. It depends on Mg(2+) as a cofactor.

It catalyses the reaction 8-oxo-dGTP + H2O = 8-oxo-dGDP + phosphate + H(+). It carries out the reaction 8-oxo-GTP + H2O = 8-oxo-GDP + phosphate + H(+). The enzyme catalyses 8-oxo-dGDP + H2O = 8-oxo-dGMP + phosphate + H(+). The catalysed reaction is 8-oxo-GDP + H2O = 8-oxo-GMP + phosphate + H(+). It catalyses the reaction P(1),P(6)-bis(5'-adenosyl) hexaphosphate + H2O = 2 ATP + 2 H(+). It carries out the reaction P(1),P(5)-bis(5'-adenosyl) pentaphosphate + H2O = ADP + ATP + 2 H(+). The enzyme catalyses P(1),P(4)-bis(5'-adenosyl) tetraphosphate + H2O = AMP + ATP + 2 H(+). Ap4A hydrolysis is inhibited by fluoride ions. Functionally, catalyzes the conversion of 8-oxo-dGTP to 8-oxo-dGDP, and 8-oxo-GTP to 8-oxo-GDP. At high enzyme concentrations, can also catalyze the conversion of 8-oxo-dGDP to 8-oxo-dGMP, and 8-oxo-GDP to 8-oxo-GMP. In addition, catalyzes the hydrolysis of the diadenosine polyphosphates diadenosine hexaphosphate (Ap6A), diadenosine pentaphosphate (Ap5A) and diadenosine tetraphosphate (Ap4A). The sequence is that of 8-oxo-(d)GTP phosphatase from Mycolicibacterium smegmatis (strain ATCC 700084 / mc(2)155) (Mycobacterium smegmatis).